A 342-amino-acid polypeptide reads, in one-letter code: Succinylglutamate desuccinylase (342 aa).

Zn(2+) is bound by residues histidine 63, glutamate 66, and histidine 155. Residue glutamate 219 is part of the active site.

The protein belongs to the AspA/AstE family. Succinylglutamate desuccinylase subfamily. It depends on Zn(2+) as a cofactor.

It carries out the reaction N-succinyl-L-glutamate + H2O = L-glutamate + succinate. Its pathway is amino-acid degradation; L-arginine degradation via AST pathway; L-glutamate and succinate from L-arginine: step 5/5. Functionally, transforms N(2)-succinylglutamate into succinate and glutamate. The polypeptide is Succinylglutamate desuccinylase (Vibrio cholerae serotype O1 (strain ATCC 39541 / Classical Ogawa 395 / O395)).